The chain runs to 20 residues: Ribosome-inactivating protein (20 aa).

The disordered stretch occupies residues 1 to 20 (NVRFDLSGATSSSYKTFIKN). The span at 8 to 20 (GATSSSYKTFIKN) shows a compositional bias: polar residues.

This sequence belongs to the ribosome-inactivating protein family. Type 1 RIP subfamily.

It carries out the reaction Endohydrolysis of the N-glycosidic bond at one specific adenosine on the 28S rRNA.. The chain is Ribosome-inactivating protein from Cucurbita pepo (Vegetable marrow).